Consider the following 199-residue polypeptide: Protein-methionine-sulfoxide reductase heme-binding subunit MsrQ (199 aa).

The next 4 helical transmembrane spans lie at 8-28 (IIWL…WLFW), 82-102 (LWCF…ELGI), 116-136 (PYLT…LTST), and 153-173 (VVYL…KVLS).

The protein belongs to the MsrQ family. As to quaternary structure, heterodimer of a catalytic subunit (MsrP) and a heme-binding subunit (MsrQ). The cofactor is FMN. Heme b serves as cofactor.

The protein localises to the cell inner membrane. In terms of biological role, part of the MsrPQ system that repairs oxidized periplasmic proteins containing methionine sulfoxide residues (Met-O), using respiratory chain electrons. Thus protects these proteins from oxidative-stress damage caused by reactive species of oxygen and chlorine generated by the host defense mechanisms. MsrPQ is essential for the maintenance of envelope integrity under bleach stress, rescuing a wide series of structurally unrelated periplasmic proteins from methionine oxidation, including the primary periplasmic chaperone SurA and the lipoprotein Pal. MsrQ provides electrons for reduction to the reductase catalytic subunit MsrP, using the quinone pool of the respiratory chain. This Salmonella arizonae (strain ATCC BAA-731 / CDC346-86 / RSK2980) protein is Protein-methionine-sulfoxide reductase heme-binding subunit MsrQ.